The sequence spans 78 residues: MKATALLIAVFILFSVFGDMGYCEFCDTPHCTRVCYDHCVRLNKHYKTCCMTNINDRIRMECLCEDKTGIKPYYPNNI.

An N-terminal signal peptide occupies residues 1-23; it reads MKATALLIAVFILFSVFGDMGYC.

Post-translationally, contains 4 disulfide bonds. Expressed by the venom gland.

The protein localises to the secreted. The protein is Toxin-like protein 10 of Urodacus yaschenkoi (Inland robust scorpion).